A 144-amino-acid chain; its full sequence is MNHKVLLINGPNLNLLGRREPSVYGHQTLADIVALLSEQAQAAGVELEHIQSNAEFELINAIHATDAQMIIINPAAFTHTSVALRDALLGVDIPFFEVHLSNVHAREPFRHHSYLSDKAIGVICGFGAQGYEFALAAAIKRLKA.

The active-site Proton acceptor is Y24. N73, H79, and D86 together coordinate substrate. The active-site Proton donor is H99. Substrate is bound by residues 100-101 (LS) and R110.

This sequence belongs to the type-II 3-dehydroquinase family. In terms of assembly, homododecamer.

The enzyme catalyses 3-dehydroquinate = 3-dehydroshikimate + H2O. It functions in the pathway metabolic intermediate biosynthesis; chorismate biosynthesis; chorismate from D-erythrose 4-phosphate and phosphoenolpyruvate: step 3/7. Catalyzes a trans-dehydration via an enolate intermediate. The sequence is that of 3-dehydroquinate dehydratase from Shewanella sp. (strain ANA-3).